A 352-amino-acid polypeptide reads, in one-letter code: Isoflavone-7-O-methyltransferase 8 (352 aa).

118-127 (VLDPTLSGSY) contributes to the substrate binding site. Glycine 196, aspartate 219, aspartate 239, methionine 240, and lysine 253 together coordinate S-adenosyl-L-methionine. The active-site Proton acceptor is the histidine 257.

This sequence belongs to the class I-like SAM-binding methyltransferase superfamily. Cation-independent O-methyltransferase family. COMT subfamily. Homodimer.

The catalysed reaction is a 7-hydroxyisoflavone + S-adenosyl-L-methionine = a 7-methoxyisoflavone + S-adenosyl-L-homocysteine + H(+). It participates in phytoalexin biosynthesis; medicarpin biosynthesis. Its function is as follows. Transfers a methyl group to 7-hydroxyls of the isoflavones daidzein, genistein and 6,7,4'-trihydroxyisoflavone. Can also methylate (+)6a-hydroxymaackiain with lower efficiency. In Medicago sativa (Alfalfa), this protein is Isoflavone-7-O-methyltransferase 8.